A 62-amino-acid chain; its full sequence is Large ribosomal subunit protein eL24 (62 aa).

Positions 6, 9, 32, and 36 each coordinate Zn(2+). The C4-type zinc-finger motif lies at Cys-6 to Cys-36.

It belongs to the eukaryotic ribosomal protein eL24 family. As to quaternary structure, part of the 50S ribosomal subunit. Forms a cluster with proteins L3 and L14. It depends on Zn(2+) as a cofactor.

In terms of biological role, binds to the 23S rRNA. This is Large ribosomal subunit protein eL24 from Methanococcoides burtonii (strain DSM 6242 / NBRC 107633 / OCM 468 / ACE-M).